A 1009-amino-acid chain; its full sequence is Type VII secretion system accessory factor EsaA (1009 aa).

A helical transmembrane segment spans residues 7–27; the sequence is IYALIVTLIIIIAIVSMIFFV. Residues 680 to 697 are compositionally biased toward basic and acidic residues; sequence TFAEEPQEPKIDKGKNDE. Residues 680-707 are disordered; sequence TFAEEPQEPKIDKGKNDEFNTMSSNLDK. 5 helical membrane passes run 822 to 842, 869 to 889, 903 to 923, 928 to 948, and 979 to 999; these read ISPTLFVLLMYLLSMITAYIF, VITSGVIGTTGLVEGLIVGLI, KFILMVILTMMVFVLINTYLL, SIGMFLMIAALGLYFVAMNNL, and IGLVLVILTVLVIIGFVLNMF.

Belongs to the EsaA family. As to quaternary structure, homodimer. Interacts with EssB.

The protein resides in the cell membrane. In terms of biological role, component of the type VII secretion system (Ess). Provides together with EssB and other components such as EssC and EssE a secretion platform across the cytoplasmic membrane in the host. This Staphylococcus aureus (strain COL) protein is Type VII secretion system accessory factor EsaA.